Here is a 228-residue protein sequence, read N- to C-terminus: Ribonuclease 3 (228 aa).

Positions 8 to 130 constitute an RNase III domain; the sequence is LKRLERRVDY…IIGAAFLDSD (123 aa). A Mg(2+)-binding site is contributed by Glu43. Residue Asp47 is part of the active site. 2 residues coordinate Mg(2+): Asp116 and Glu119. Glu119 is an active-site residue. The DRBM domain occupies 157 to 226; it reads DPKTRLQEHL…ANKMLDSLSG (70 aa).

The protein belongs to the ribonuclease III family. Homodimer. Mg(2+) serves as cofactor.

Its subcellular location is the cytoplasm. It catalyses the reaction Endonucleolytic cleavage to 5'-phosphomonoester.. In terms of biological role, digests double-stranded RNA. Involved in the processing of primary rRNA transcript to yield the immediate precursors to the large and small rRNAs (23S and 16S). Processes some mRNAs, and tRNAs when they are encoded in the rRNA operon. Processes pre-crRNA and tracrRNA of type II CRISPR loci if present in the organism. This Psychromonas ingrahamii (strain DSM 17664 / CCUG 51855 / 37) protein is Ribonuclease 3.